The sequence spans 371 residues: MDPDRQADIAALDCTLTTVERVLDVEGLRSRIEKLEHEASDPHLWDDQTRAQRVTSELSHTQGELRRVEELRRRLDDLPVLYELAAEEAGAAAADAVAEADAELKSLRADIEATEVRTLLSGEYDEREALVTIRSGAGGVDAADWAEMLMRMYIRWAEQHKYPVEVFDTSYAEEAGIKSATFAVHAPFAYGTLSVEQGTHRLVRISPFDNQSRRQTSFAEVEVLPVVETTDHIDIPEGDVRVDVYRSSGPGGQSVNTTDSAVRLTHIPSGIVVTCQNEKSQLQNKIAAMRVLQAKLLERKRLEERAELDALKADGGSSWGNQMRSYVLHPYQMVKDLRTEYEVGNPAAVLDGDLDGFLEAGIRWRNRRNDD.

Q253 carries the N5-methylglutamine modification.

It belongs to the prokaryotic/mitochondrial release factor family. Methylated by PrmC. Methylation increases the termination efficiency of RF2.

It localises to the cytoplasm. Peptide chain release factor 2 directs the termination of translation in response to the peptide chain termination codons UGA and UAA. This chain is Peptide chain release factor 2 (prfB), found in Mycobacterium bovis (strain ATCC BAA-935 / AF2122/97).